Consider the following 28-residue polypeptide: Seed allergenic protein 1 (28 aa).

The segment at 1 to 28 (VTXEEGXYSISDQSKVGEQXIRSPDREM) is disordered.

The polypeptide is Seed allergenic protein 1 (Prunus dulcis (Almond)).